The primary structure comprises 1517 residues: DNA-directed RNA polymerase subunit beta' (1517 aa).

Residues C71, C73, C86, and C89 each coordinate Zn(2+). 3 residues coordinate Mg(2+): D482, D484, and D486. 4 residues coordinate Zn(2+): C812, C886, C893, and C896.

Belongs to the RNA polymerase beta' chain family. In terms of assembly, the RNAP catalytic core consists of 2 alpha, 1 beta, 1 beta' and 1 omega subunit. When a sigma factor is associated with the core the holoenzyme is formed, which can initiate transcription. The cofactor is Mg(2+). Zn(2+) serves as cofactor.

It catalyses the reaction RNA(n) + a ribonucleoside 5'-triphosphate = RNA(n+1) + diphosphate. DNA-dependent RNA polymerase catalyzes the transcription of DNA into RNA using the four ribonucleoside triphosphates as substrates. In Campylobacter lari (strain RM2100 / D67 / ATCC BAA-1060), this protein is DNA-directed RNA polymerase subunit beta'.